Reading from the N-terminus, the 416-residue chain is Type II methyltransferase M.PspPI (416 aa).

Residues 77–410 (YSLVELFAGA…KAIIRMLNAA (334 aa)) form the SAM-dependent MTase C5-type domain. The active site involves cysteine 149.

It belongs to the class I-like SAM-binding methyltransferase superfamily. C5-methyltransferase family.

The enzyme catalyses a 2'-deoxycytidine in DNA + S-adenosyl-L-methionine = a 5-methyl-2'-deoxycytidine in DNA + S-adenosyl-L-homocysteine + H(+). In terms of biological role, a methylase, recognizes the double-stranded sequence 5'-GGNCC-3', methylates C-4 on both strands, and protects the DNA from cleavage by the PspPI endonuclease. This is Type II methyltransferase M.PspPI from Psychrobacter sp. (strain TA137).